We begin with the raw amino-acid sequence, 222 residues long: Voltage-dependent calcium channel gamma-1 subunit (222 aa).

Residues 1–10 (MSQTKMLKVR) are Cytoplasmic-facing. A helical membrane pass occupies residues 11–29 (VTLFCILAGIVLAMTAVVT). Residues 30-108 (DHWAVLSPHM…TQKEYSISAA (79 aa)) are Extracellular-facing. Asparagine 43 and asparagine 79 each carry an N-linked (GlcNAc...) asparagine glycan. Residues cysteine 57 and cysteine 80 are joined by a disulfide bond. A helical membrane pass occupies residues 109–129 (AIAIFSLGFIILGSLCVLLSL). Residues 130–134 (GKKRD) are Cytoplasmic-facing. The chain crosses the membrane as a helical span at residues 135-155 (YLLRPASMFYAFAGLCILVSV). The Extracellular portion of the chain corresponds to 156–179 (EVMRQSVKRMIDSEDTVWIEYYYS). Residues 180–204 (WSFACACAAFILLFLGGLALLLFSL) traverse the membrane as a helical segment. Residues 205-222 (PRMPRNPWESCMDAEPEH) lie on the Cytoplasmic side of the membrane.

Belongs to the PMP-22/EMP/MP20 family. CACNG subfamily. As to quaternary structure, component of a calcium channel complex consisting of a pore-forming alpha subunit (CACNA1S) and the ancillary subunits CACNB1 or CACNB2, CACNG1 and CACNA2D1. The channel complex contains alpha, beta, gamma and delta subunits in a 1:1:1:1 ratio, i.e. it contains either CACNB1 or CACNB2. Post-translationally, N-glycosylated. In terms of tissue distribution, skeletal muscle.

The protein localises to the cell membrane. Its subcellular location is the sarcolemma. Regulatory subunit of the voltage-gated calcium channel that gives rise to L-type calcium currents in skeletal muscle. Regulates channel inactivation kinetics. The sequence is that of Voltage-dependent calcium channel gamma-1 subunit (CACNG1) from Homo sapiens (Human).